Consider the following 592-residue polypeptide: Bifunctional enzyme BirA/CoaX (592 aa).

The segment at 1–329 (MTVLKPSHWR…ISLRPDNRSV (329 aa)) is biotin--protein ligase. One can recognise a BPL/LPL catalytic domain in the interval 83-259 (QTALKHECAS…ELGAVLEQYA (177 aa)). The type III pantothenate kinase stretch occupies residues 336 to 592 (DSERFLLLEG…AAEGGESEHA (257 aa)). 344 to 351 (EGGNSRLK) lines the ATP pocket. Substrate-binding positions include Y426 and 433 to 436 (GSDR). D435 serves as the catalytic Proton acceptor. T458 lines the ATP pocket. T508 provides a ligand contact to substrate.

In the N-terminal section; belongs to the biotin--protein ligase family. The protein in the C-terminal section; belongs to the type III pantothenate kinase family. NH4(+) is required as a cofactor. The cofactor is K(+).

The protein resides in the cytoplasm. The enzyme catalyses biotin + L-lysyl-[protein] + ATP = N(6)-biotinyl-L-lysyl-[protein] + AMP + diphosphate + H(+). It catalyses the reaction (R)-pantothenate + ATP = (R)-4'-phosphopantothenate + ADP + H(+). It participates in cofactor biosynthesis; coenzyme A biosynthesis; CoA from (R)-pantothenate: step 1/5. Functionally, activates biotin to form biotinyl-5'-adenylate and transfers the biotin moiety to biotin-accepting proteins. In terms of biological role, catalyzes the phosphorylation of pantothenate (Pan), the first step in CoA biosynthesis. The polypeptide is Bifunctional enzyme BirA/CoaX (birA/coaX) (Neisseria gonorrhoeae (strain ATCC 700825 / FA 1090)).